The sequence spans 187 residues: ATP synthase subunit b, chloroplastic (187 aa).

Residues 34–56 form a helical membrane-spanning segment; that stretch reads IINLSVVLGLVFTLGRNFLISLL.

It belongs to the ATPase B chain family. F-type ATPases have 2 components, F(1) - the catalytic core - and F(0) - the membrane proton channel. F(1) has five subunits: alpha(3), beta(3), gamma(1), delta(1), epsilon(1). F(0) has four main subunits: a(1), b(1), b'(1) and c(10-14). The alpha and beta chains form an alternating ring which encloses part of the gamma chain. F(1) is attached to F(0) by a central stalk formed by the gamma and epsilon chains, while a peripheral stalk is formed by the delta, b and b' chains.

The protein localises to the plastid. It is found in the chloroplast thylakoid membrane. In terms of biological role, f(1)F(0) ATP synthase produces ATP from ADP in the presence of a proton or sodium gradient. F-type ATPases consist of two structural domains, F(1) containing the extramembraneous catalytic core and F(0) containing the membrane proton channel, linked together by a central stalk and a peripheral stalk. During catalysis, ATP synthesis in the catalytic domain of F(1) is coupled via a rotary mechanism of the central stalk subunits to proton translocation. Its function is as follows. Component of the F(0) channel, it forms part of the peripheral stalk, linking F(1) to F(0). The polypeptide is ATP synthase subunit b, chloroplastic (Pleurastrum terricola (Filamentous green alga)).